Reading from the N-terminus, the 140-residue chain is Small ribosomal subunit protein uS12 (140 aa).

Positions 33-55 (KEQTNVSSPQKRGVCTRVGTMTP) are disordered. Asp102 is subject to 3-methylthioaspartic acid.

This sequence belongs to the universal ribosomal protein uS12 family. As to quaternary structure, part of the 30S ribosomal subunit. Contacts proteins S8 and S17. May interact with IF1 in the 30S initiation complex.

In terms of biological role, with S4 and S5 plays an important role in translational accuracy. Functionally, interacts with and stabilizes bases of the 16S rRNA that are involved in tRNA selection in the A site and with the mRNA backbone. Located at the interface of the 30S and 50S subunits, it traverses the body of the 30S subunit contacting proteins on the other side and probably holding the rRNA structure together. The combined cluster of proteins S8, S12 and S17 appears to hold together the shoulder and platform of the 30S subunit. This chain is Small ribosomal subunit protein uS12, found in Geobacillus thermodenitrificans (strain NG80-2).